We begin with the raw amino-acid sequence, 212 residues long: Thiamine-phosphate synthase (212 aa).

Residues 40–44 (QFREK) and Asn-75 contribute to the 4-amino-2-methyl-5-(diphosphooxymethyl)pyrimidine site. 2 residues coordinate Mg(2+): Asp-76 and Asp-95. Ser-113 contacts 4-amino-2-methyl-5-(diphosphooxymethyl)pyrimidine. 139–141 (TPS) contacts 2-[(2R,5Z)-2-carboxy-4-methylthiazol-5(2H)-ylidene]ethyl phosphate. A 4-amino-2-methyl-5-(diphosphooxymethyl)pyrimidine-binding site is contributed by Lys-142. 2-[(2R,5Z)-2-carboxy-4-methylthiazol-5(2H)-ylidene]ethyl phosphate is bound by residues Gly-171 and 191-192 (IS).

Belongs to the thiamine-phosphate synthase family. Mg(2+) is required as a cofactor.

It carries out the reaction 2-[(2R,5Z)-2-carboxy-4-methylthiazol-5(2H)-ylidene]ethyl phosphate + 4-amino-2-methyl-5-(diphosphooxymethyl)pyrimidine + 2 H(+) = thiamine phosphate + CO2 + diphosphate. The enzyme catalyses 2-(2-carboxy-4-methylthiazol-5-yl)ethyl phosphate + 4-amino-2-methyl-5-(diphosphooxymethyl)pyrimidine + 2 H(+) = thiamine phosphate + CO2 + diphosphate. The catalysed reaction is 4-methyl-5-(2-phosphooxyethyl)-thiazole + 4-amino-2-methyl-5-(diphosphooxymethyl)pyrimidine + H(+) = thiamine phosphate + diphosphate. It participates in cofactor biosynthesis; thiamine diphosphate biosynthesis; thiamine phosphate from 4-amino-2-methyl-5-diphosphomethylpyrimidine and 4-methyl-5-(2-phosphoethyl)-thiazole: step 1/1. Its function is as follows. Condenses 4-methyl-5-(beta-hydroxyethyl)thiazole monophosphate (THZ-P) and 2-methyl-4-amino-5-hydroxymethyl pyrimidine pyrophosphate (HMP-PP) to form thiamine monophosphate (TMP). The chain is Thiamine-phosphate synthase from Staphylococcus carnosus (strain TM300).